The following is a 327-amino-acid chain: Pectate lyase A (327 aa).

An N-terminal signal peptide occupies residues 1-19 (MQNLKFLIAAVSCLGPALA). N-linked (GlcNAc...) asparagine glycosylation occurs at Asn-99. Ca(2+)-binding residues include Asp-140, Asp-169, and Asp-173. The active site involves Arg-226.

It belongs to the polysaccharide lyase 1 family. Ca(2+) serves as cofactor.

It localises to the secreted. The catalysed reaction is Eliminative cleavage of (1-&gt;4)-alpha-D-galacturonan to give oligosaccharides with 4-deoxy-alpha-D-galact-4-enuronosyl groups at their non-reducing ends.. Its function is as follows. Pectinolytic enzyme consist of four classes of enzymes: pectin lyase, polygalacturonase, pectin methylesterase and rhamnogalacturonase. Among pectinolytic enzymes, pectin lyase is the most important in depolymerization of pectin, since it cleaves internal glycosidic bonds of highly methylated pectins. Favors pectate, the anion, over pectin, the methyl ester. The sequence is that of Pectate lyase A (plyA) from Emericella nidulans (strain FGSC A4 / ATCC 38163 / CBS 112.46 / NRRL 194 / M139) (Aspergillus nidulans).